Here is a 642-residue protein sequence, read N- to C-terminus: Fork head protein homolog 2 (642 aa).

The tract at residues 1-23 is disordered; sequence MTVRRLESKSEHISDDEERKEQL. One can recognise an FHA domain in the interval 96–160; sequence IILGREPANP…NGIKVDGKLF (65 aa). Positions 223–318 form a DNA-binding region, fork-head; the sequence is KPPYSYSVMI…AKTRKTPRKR (96 aa). Residues 310–319 are compositionally biased toward basic residues; that stretch reads KTRKTPRKRS. 3 disordered regions span residues 310 to 392, 519 to 574, and 586 to 642; these read KTRK…ETYK, VSDS…TEEN, and ATME…KSSA. Phosphoserine is present on residues S319, S321, S322, S334, and S336. Residues 348-362 are compositionally biased toward low complexity; sequence TSIPAAEPASSTTSA. Polar residues-rich tracts occupy residues 363–381, 519–552, and 599–642; these read RDQT…TAET, VSDS…SANK, and TPTS…KSSA. S375, S535, and S626 each carry phosphoserine.

Phosphorylated. Occurs periodically during mitosis.

The protein localises to the nucleus. Required for promoter sequence element PCB-driven, M-phase-specific transcription. Acts as a transcriptional activator with a role in the regulation of mitosis. Binds, cooperatively with mcm1, the CLB cluster regulatory elements throughout the cell cycle. Regulates the periodic transcription of cdc15 and spo12. Required for the correct timing, positioning and contraction of the division septum. This chain is Fork head protein homolog 2 (fkh2), found in Schizosaccharomyces pombe (strain 972 / ATCC 24843) (Fission yeast).